The chain runs to 349 residues: C-X-C chemokine receptor type 1 (349 aa).

Residues 1-44 lie on the Extracellular side of the membrane; the sequence is MAEAEYFIWIAPEGDFEEEFGNITRMLPTGEYFSPCKRVPMTNR. Asparagine 22 carries an N-linked (GlcNAc...) asparagine glycan. The chain crosses the membrane as a helical span at residues 45 to 71; that stretch reads QAVVVFYALVFLLSLLGNSLVMLVILY. The Cytoplasmic segment spans residues 72–80; that stretch reads RRRTRSVTD. A helical transmembrane segment spans residues 81–101; it reads VYVLNLAIADLLFSLTLPFLA. The Extracellular portion of the chain corresponds to 102 to 116; sequence VSKWKGWIFGTPLCK. Residues cysteine 115 and cysteine 192 are joined by a disulfide bond. Residues 117–138 traverse the membrane as a helical segment; the sequence is MVSLLKEVNFFSGILLLACISV. Residues 139 to 159 are Cytoplasmic-facing; it reads DRYLAIVHATRTLTRKRYLVK. The chain crosses the membrane as a helical span at residues 160 to 179; the sequence is FVCMGTWGLSLVLSLPFAIF. Residues 180 to 204 are Extracellular-facing; that stretch reads RQAYKPYRSGTVCYEVLGEATADLR. Residues 205–225 traverse the membrane as a helical segment; the sequence is ITLRGLSHIFGFLLPLFIMLV. Residues 226 to 247 lie on the Cytoplasmic side of the membrane; it reads CYGLTLRTLFKAHMRQKRRAMW. The helical transmembrane segment at 248–269 threads the bilayer; sequence VIFAVVLVFLLCCLPYNLVLLS. Over 270 to 290 the chain is Extracellular; that stretch reads DTLLGAHLIQDTCERRNNIDQ. The helical transmembrane segment at 291–313 threads the bilayer; that stretch reads ALYITEILGFSHSCLNPVIYAFV. Topologically, residues 314–349 are cytoplasmic; the sequence is GQSFRHEFLKILANLVHKEVLTHHSASFRTSLTTIY.

Belongs to the G-protein coupled receptor 1 family. In terms of assembly, interacts with IL8. Interacts with GNAI2.

It localises to the cell membrane. Functionally, receptor to interleukin-8, which is a powerful neutrophils chemotactic factor. Binding of IL-8 to the receptor causes activation of neutrophils. This response is mediated via a G-protein that activates a phosphatidylinositol-calcium second messenger system. The chain is C-X-C chemokine receptor type 1 (Cxcr1) from Rattus norvegicus (Rat).